An 826-amino-acid chain; its full sequence is Prominin-1-A (826 aa).

Transmembrane regions (helical) follow at residues 50–70 (YYEP…LFVV), 106–126 (VVCA…GLLF), and 153–173 (LLTT…LCAY). Residues Asn178, Asn268, Asn286, Asn327, Asn388, and Asn404 are each glycosylated (N-linked (GlcNAc...) asparagine). 2 helical membrane passes run 439 to 459 (CMIV…ILGF) and 483 to 503 (VGFS…LFLA). 4 N-linked (GlcNAc...) asparagine glycosylation sites follow: Asn576, Asn582, Asn617, and Asn693.

It belongs to the prominin family.

It localises to the apical cell membrane. It is found in the cell projection. Its subcellular location is the microvillus membrane. The protein resides in the endoplasmic reticulum. The protein localises to the endoplasmic reticulum-Golgi intermediate compartment. Functionally, may play a role in cell differentiation, proliferation and apoptosis. Binds cholesterol in cholesterol-containing plasma membrane microdomains and may play a role in the organization of the apical plasma membrane in epithelial cells. Involved in regulation of MAPK and Akt signaling pathways. This is Prominin-1-A (prom1a) from Danio rerio (Zebrafish).